Here is a 941-residue protein sequence, read N- to C-terminus: Heat shock protein 70 homolog (941 aa).

The disordered stretch occupies residues 851–887 (ENQPDIPEDSEDSESEDDTTTSKDSESSEITENLALP). The segment covering 856–869 (IPEDSEDSESEDDT) has biased composition (acidic residues).

The protein belongs to the heat shock protein 70 family.

Probable chaperone. In Acanthamoeba polyphaga (Amoeba), this protein is Heat shock protein 70 homolog.